The primary structure comprises 407 residues: Tryptophan synthase beta chain (407 aa).

Position 98 is an N6-(pyridoxal phosphate)lysine (Lys98).

It belongs to the TrpB family. Tetramer of two alpha and two beta chains. Pyridoxal 5'-phosphate serves as cofactor.

It carries out the reaction (1S,2R)-1-C-(indol-3-yl)glycerol 3-phosphate + L-serine = D-glyceraldehyde 3-phosphate + L-tryptophan + H2O. The protein operates within amino-acid biosynthesis; L-tryptophan biosynthesis; L-tryptophan from chorismate: step 5/5. Functionally, the beta subunit is responsible for the synthesis of L-tryptophan from indole and L-serine. In Bradyrhizobium sp. (strain BTAi1 / ATCC BAA-1182), this protein is Tryptophan synthase beta chain.